The sequence spans 67 residues: ATP synthase protein 8 (67 aa).

Residues 8-24 (TWFITITSMTITLFIMF) traverse the membrane as a helical segment. An N6-acetyllysine; alternate modification is found at K54. An N6-succinyllysine; alternate modification is found at K54. K57 carries the post-translational modification N6-acetyllysine.

The protein belongs to the ATPase protein 8 family. F-type ATPases have 2 components, CF(1) - the catalytic core - and CF(0) - the membrane proton channel. Component of an ATP synthase complex composed of ATP5PB, ATP5MC1, ATP5F1E, ATP5PD, ATP5ME, ATP5PF, ATP5MF, MT-ATP6, MT-ATP8, ATP5F1A, ATP5F1B, ATP5F1D, ATP5F1C, ATP5PO, ATP5MG, ATP5MK and ATP5MJ. Interacts with PRICKLE3.

The protein resides in the mitochondrion membrane. Its function is as follows. Mitochondrial membrane ATP synthase (F(1)F(0) ATP synthase or Complex V) produces ATP from ADP in the presence of a proton gradient across the membrane which is generated by electron transport complexes of the respiratory chain. F-type ATPases consist of two structural domains, F(1) - containing the extramembraneous catalytic core and F(0) - containing the membrane proton channel, linked together by a central stalk and a peripheral stalk. During catalysis, ATP synthesis in the catalytic domain of F(1) is coupled via a rotary mechanism of the central stalk subunits to proton translocation. Part of the complex F(0) domain. Minor subunit located with subunit a in the membrane. This Rhinoceros unicornis (Greater Indian rhinoceros) protein is ATP synthase protein 8 (MT-ATP8).